Consider the following 345-residue polypeptide: Phosphoribosylformylglycinamidine cyclo-ligase (345 aa).

It belongs to the AIR synthase family.

Its subcellular location is the cytoplasm. The catalysed reaction is 2-formamido-N(1)-(5-O-phospho-beta-D-ribosyl)acetamidine + ATP = 5-amino-1-(5-phospho-beta-D-ribosyl)imidazole + ADP + phosphate + H(+). It participates in purine metabolism; IMP biosynthesis via de novo pathway; 5-amino-1-(5-phospho-D-ribosyl)imidazole from N(2)-formyl-N(1)-(5-phospho-D-ribosyl)glycinamide: step 2/2. The chain is Phosphoribosylformylglycinamidine cyclo-ligase from Limosilactobacillus fermentum (strain NBRC 3956 / LMG 18251) (Lactobacillus fermentum).